The chain runs to 449 residues: Probable magnetosome protein Mms48 (449 aa).

An N-terminal signal peptide occupies residues 1–18; sequence MLLRLIVLLIFMSPVVFA. A helical transmembrane segment spans residues 40–60; that stretch reads SNMPVLLAVILVVFLIFSALS. Residues 323-356 form a TPR repeat; it reads PDGHLAAGEAAFAVQKWGVARRHIMAALKIAPDA.

Its subcellular location is the magnetosome membrane. In terms of biological role, overexpression in wild-type cells increases the number of cells with double magnetosome chains significantly. The 4 genes of this operon collectively influence magnetosome size and number. This is Probable magnetosome protein Mms48 from Magnetospirillum gryphiswaldense (strain DSM 6361 / JCM 21280 / NBRC 15271 / MSR-1).